A 183-amino-acid polypeptide reads, in one-letter code: Chromophore lyase CpcT/CpeT 4 (183 aa).

This sequence belongs to the CpcT/CpeT biliprotein lyase family.

Functionally, covalently attaches a chromophore to Cys residue(s) of phycobiliproteins. The polypeptide is Chromophore lyase CpcT/CpeT 4 (Gloeobacter violaceus (strain ATCC 29082 / PCC 7421)).